Reading from the N-terminus, the 282-residue chain is Pantothenate synthetase (282 aa).

Residue 30-37 (MGFLHDGH) participates in ATP binding. H37 serves as the catalytic Proton donor. Residue Q60 participates in (R)-pantoate binding. Q60 is a beta-alanine binding site. 146 to 149 (GQKD) serves as a coordination point for ATP. Q152 contacts (R)-pantoate. ATP is bound by residues I175 and 183-186 (KSSR).

This sequence belongs to the pantothenate synthetase family. In terms of assembly, homodimer.

It is found in the cytoplasm. The enzyme catalyses (R)-pantoate + beta-alanine + ATP = (R)-pantothenate + AMP + diphosphate + H(+). It participates in cofactor biosynthesis; (R)-pantothenate biosynthesis; (R)-pantothenate from (R)-pantoate and beta-alanine: step 1/1. Its function is as follows. Catalyzes the condensation of pantoate with beta-alanine in an ATP-dependent reaction via a pantoyl-adenylate intermediate. The sequence is that of Pantothenate synthetase from Campylobacter jejuni subsp. doylei (strain ATCC BAA-1458 / RM4099 / 269.97).